The sequence spans 323 residues: Lipoyl synthase (323 aa).

Positions 69, 74, 80, 95, 99, 102, and 310 each coordinate [4Fe-4S] cluster. A Radical SAM core domain is found at 81-299; the sequence is WTHGTLTVMI…EAWGYELGFR (219 aa).

Belongs to the radical SAM superfamily. Lipoyl synthase family. [4Fe-4S] cluster serves as cofactor.

The protein localises to the cytoplasm. It carries out the reaction [[Fe-S] cluster scaffold protein carrying a second [4Fe-4S](2+) cluster] + N(6)-octanoyl-L-lysyl-[protein] + 2 oxidized [2Fe-2S]-[ferredoxin] + 2 S-adenosyl-L-methionine + 4 H(+) = [[Fe-S] cluster scaffold protein] + N(6)-[(R)-dihydrolipoyl]-L-lysyl-[protein] + 4 Fe(3+) + 2 hydrogen sulfide + 2 5'-deoxyadenosine + 2 L-methionine + 2 reduced [2Fe-2S]-[ferredoxin]. It participates in protein modification; protein lipoylation via endogenous pathway; protein N(6)-(lipoyl)lysine from octanoyl-[acyl-carrier-protein]: step 2/2. In terms of biological role, catalyzes the radical-mediated insertion of two sulfur atoms into the C-6 and C-8 positions of the octanoyl moiety bound to the lipoyl domains of lipoate-dependent enzymes, thereby converting the octanoylated domains into lipoylated derivatives. This is Lipoyl synthase from Thermus thermophilus (strain ATCC 27634 / DSM 579 / HB8).